The sequence spans 136 residues: Large ribosomal subunit protein bL20c (136 aa).

Belongs to the bacterial ribosomal protein bL20 family.

It localises to the plastid. The protein resides in the chloroplast. Binds directly to 23S ribosomal RNA and is necessary for the in vitro assembly process of the 50S ribosomal subunit. It is not involved in the protein synthesizing functions of that subunit. The chain is Large ribosomal subunit protein bL20c from Huperzia lucidula (Shining clubmoss).